Reading from the N-terminus, the 634-residue chain is Probable potassium transport system protein Kup 1 (634 aa).

Transmembrane regions (helical) follow at residues F20–L40, V64–I84, F110–I130, P148–V168, V176–I196, A224–A244, F256–M276, F290–I310, I348–F368, A377–M397, V405–A425, and I430–T450.

Belongs to the HAK/KUP transporter (TC 2.A.72) family.

It localises to the cell inner membrane. The catalysed reaction is K(+)(in) + H(+)(in) = K(+)(out) + H(+)(out). In terms of biological role, transport of potassium into the cell. Likely operates as a K(+):H(+) symporter. The polypeptide is Probable potassium transport system protein Kup 1 (Rhodopseudomonas palustris (strain BisB5)).